Consider the following 86-residue polypeptide: Large ribosomal subunit protein bL31B (86 aa).

Belongs to the bacterial ribosomal protein bL31 family. Type B subfamily. In terms of assembly, part of the 50S ribosomal subunit.

The sequence is that of Large ribosomal subunit protein bL31B from Streptococcus uberis (strain ATCC BAA-854 / 0140J).